Consider the following 28-residue polypeptide: GTACGESCYVLPCFTVGCTCTSSQCFKN.

A cross-link (cyclopeptide (Gly-Asn)) is located at residues 1–28; sequence GTACGESCYVLPCFTVGCTCTSSQCFKN. Cystine bridges form between cysteine 4-cysteine 18, cysteine 8-cysteine 20, and cysteine 13-cysteine 25.

Post-translationally, this is a cyclic peptide.

Probably participates in a plant defense mechanism. Has anti-HIV activity. This chain is Cycloviolin-B, found in Leonia cymosa (Sacha uba).